The primary structure comprises 176 residues: Acireductone dioxygenase (176 aa).

Fe(2+) contacts are provided by His100, His102, Glu106, and His145. His100, His102, Glu106, and His145 together coordinate Ni(2+).

It belongs to the acireductone dioxygenase (ARD) family. Monomer. Fe(2+) serves as cofactor. Requires Ni(2+) as cofactor.

It catalyses the reaction 1,2-dihydroxy-5-(methylsulfanyl)pent-1-en-3-one + O2 = 3-(methylsulfanyl)propanoate + CO + formate + 2 H(+). The enzyme catalyses 1,2-dihydroxy-5-(methylsulfanyl)pent-1-en-3-one + O2 = 4-methylsulfanyl-2-oxobutanoate + formate + 2 H(+). Its pathway is amino-acid biosynthesis; L-methionine biosynthesis via salvage pathway; L-methionine from S-methyl-5-thio-alpha-D-ribose 1-phosphate: step 5/6. Catalyzes 2 different reactions between oxygen and the acireductone 1,2-dihydroxy-3-keto-5-methylthiopentene (DHK-MTPene) depending upon the metal bound in the active site. Fe-containing acireductone dioxygenase (Fe-ARD) produces formate and 2-keto-4-methylthiobutyrate (KMTB), the alpha-ketoacid precursor of methionine in the methionine recycle pathway. Ni-containing acireductone dioxygenase (Ni-ARD) produces methylthiopropionate, carbon monoxide and formate, and does not lie on the methionine recycle pathway. The protein is Acireductone dioxygenase of Bacillus pumilus (strain SAFR-032).